Consider the following 85-residue polypeptide: MSKEDLIEMQGKVEEVLPDSRFRVTLDNGHQLIAYAGGKMRKHRIRVLAGDRVSLELSPYDLNKGRLTFRHIEGRGPRAPQRGAR.

Residues 1-72 form the S1-like domain; sequence MSKEDLIEMQ…NKGRLTFRHI (72 aa).

It belongs to the IF-1 family. In terms of assembly, component of the 30S ribosomal translation pre-initiation complex which assembles on the 30S ribosome in the order IF-2 and IF-3, IF-1 and N-formylmethionyl-tRNA(fMet); mRNA recruitment can occur at any time during PIC assembly.

It is found in the cytoplasm. Its function is as follows. One of the essential components for the initiation of protein synthesis. Stabilizes the binding of IF-2 and IF-3 on the 30S subunit to which N-formylmethionyl-tRNA(fMet) subsequently binds. Helps modulate mRNA selection, yielding the 30S pre-initiation complex (PIC). Upon addition of the 50S ribosomal subunit IF-1, IF-2 and IF-3 are released leaving the mature 70S translation initiation complex. In Paracidovorax citrulli (strain AAC00-1) (Acidovorax citrulli), this protein is Translation initiation factor IF-1 1.